A 2371-amino-acid chain; its full sequence is Highly reducing polyketide synthase ntnH (2371 aa).

The Ketosynthase family 3 (KS3) domain occupies 10–429 (PSPIAIVGIG…GANAHVILEG (420 aa)). Residues Cys180, His316, and His352 each act as for beta-ketoacyl synthase activity in the active site. Residues 528 to 796 (FIFTGQGAQW…NSCLSRGADA (269 aa)) form a malonyl-CoA:ACP transacylase (MAT) domain region. The N-terminal hotdog fold stretch occupies residues 858–986 (HELLGARVIG…GKVHPGNAST (129 aa)). Residues 858-1142 (HELLGARVIG…GIRFRILENN (285 aa)) form a dehydratase (DH) domain region. Positions 858–1145 (HELLGARVIG…FRILENNRSK (288 aa)) constitute a PKS/mFAS DH domain. The active-site Proton acceptor; for dehydratase activity is His890. Positions 1001 to 1145 (VRGVISAKWY…FRILENNRSK (145 aa)) are C-terminal hotdog fold. Catalysis depends on Asp1059, which acts as the Proton donor; for dehydratase activity. Residues 1309-1456 (FFQLLGHNKK…FENVTAIMDQ (148 aa)) form a methyltransferase (CMet) domain region. Residues 1669–1968 (GLLSSLQWQG…GHRPIGAICI (300 aa)) are enoyl reductase (ER) (ER) domain. Residues 1993–2167 (SYVLIGGLGG…ASVIDLGVME (175 aa)) are ketoreductase (KR) domain. A Carrier domain is found at 2280-2362 (EDETAVAEFL…DLGKLARSRI (83 aa)). Residue Ser2322 is modified to O-(pantetheine 4'-phosphoryl)serine.

Its pathway is secondary metabolite biosynthesis; terpenoid biosynthesis. Functionally, highly reducing polyketide synthase; part of the gene cluster that mediates the biosynthesis of the meroterpenoids nectripenoids A and B, as well as cochliquninone D and isocochliquninone E. The pathway probably begins with the HR-PKS ntnH that catalyzes two chain-extension steps to form a reduced triketide, which then primes the SAT domain in the NR-PKS ntnG to initiate three more cycles of extension to give a linear hexaketide corresponding to the polyketide part of nectripenoids. The FAD-dependent monooxygenase ntnJ then performs an oxidative decarboxylation at C11 of the ntnH/ntnG product, via an electrophilic aromatic hydroxylation with concomitant ipso-decarboxylation. The membrane-bound polyprenyl transferase ntnF then introduces a farnesyl group before the FAD-dependent monooxygenase ntnK functions as the first epoxidase on terminal C12'-C13' olefin, followed by a second epoxidation on C7'-C8' catalyzed by ntnA. The terpene cyclase/mutase ntnI then initiates the sequential tricyclic ring formation through protonation of the terminal epoxide and catalyzes the regioselective and stereoselective 6/6/6-tricyclic ring formation. The cytochrome P450 monooxygenase ntnM may then hydroxylate C1'. This chain is Highly reducing polyketide synthase ntnH, found in Nectria sp.